The sequence spans 192 residues: uncharacterized protein (192 aa).

The disordered stretch occupies residues 71 to 100; the sequence is NNVLPEPSKPNNPVVNPPVSPIQPKTDPEQ. A compositionally biased stretch (pro residues) spans 77 to 91; the sequence is PSKPNNPVVNPPVSP.

This is an uncharacterized protein from Caenorhabditis elegans.